A 318-amino-acid chain; its full sequence is Ornithine carbamoyltransferase (318 aa).

Carbamoyl phosphate is bound by residues 63–66, Gln90, Arg114, and 141–144; these read STRT and HPCQ. Residues Asn172, Asp235, and 239-240 each bind L-ornithine; that span reads SM. Carbamoyl phosphate is bound by residues 275–276 and Arg303; that span reads CL.

Belongs to the aspartate/ornithine carbamoyltransferase superfamily. OTCase family.

It localises to the cytoplasm. It carries out the reaction carbamoyl phosphate + L-ornithine = L-citrulline + phosphate + H(+). Its pathway is amino-acid biosynthesis; L-arginine biosynthesis; L-arginine from L-ornithine and carbamoyl phosphate: step 1/3. Functionally, reversibly catalyzes the transfer of the carbamoyl group from carbamoyl phosphate (CP) to the N(epsilon) atom of ornithine (ORN) to produce L-citrulline. This Prochlorococcus marinus (strain SARG / CCMP1375 / SS120) protein is Ornithine carbamoyltransferase.